The chain runs to 119 residues: T cell receptor alpha variable 29/delta variable 5 (119 aa).

Positions 1 to 21 are cleaved as a signal peptide; it reads MAMLLGASVLILWLQPDWVNS. The region spanning 22–119 is the Ig-like domain; sequence QQKNDDQQVK…DSAVYFCAAS (98 aa). An intrachain disulfide couples Cys-49 to Cys-116. N-linked (GlcNAc...) asparagine glycosylation is present at Asn-93.

As to quaternary structure, alpha-beta TR is a heterodimer composed of an alpha and beta chain; disulfide-linked. The alpha-beta TR is associated with the transmembrane signaling CD3 coreceptor proteins to form the TR-CD3 (TcR or TCR). The assembly of alpha-beta TR heterodimers with CD3 occurs in the endoplasmic reticulum where a single alpha-beta TR heterodimer associates with one CD3D-CD3E heterodimer, one CD3G-CD3E heterodimer and one CD247 homodimer forming a stable octameric structure. CD3D-CD3E and CD3G-CD3E heterodimers preferentially associate with TR alpha and TR beta chains, respectively. The association of the CD247 homodimer is the last step of TcR assembly in the endoplasmic reticulum and is required for transport to the cell surface.

Its subcellular location is the cell membrane. In terms of biological role, v region of the variable domain of T cell receptor (TR) alpha chain that participates in the antigen recognition. Alpha-beta T cell receptors are antigen specific receptors which are essential to the immune response and are present on the cell surface of T lymphocytes. Recognize peptide-major histocompatibility (MH) (pMH) complexes that are displayed by antigen presenting cells (APC), a prerequisite for efficient T cell adaptive immunity against pathogens. Binding of alpha-beta TR to pMH complex initiates TR-CD3 clustering on the cell surface and intracellular activation of LCK that phosphorylates the ITAM motifs of CD3G, CD3D, CD3E and CD247 enabling the recruitment of ZAP70. In turn ZAP70 phosphorylates LAT, which recruits numerous signaling molecules to form the LAT signalosome. The LAT signalosome propagates signal branching to three major signaling pathways, the calcium, the mitogen-activated protein kinase (MAPK) kinase and the nuclear factor NF-kappa-B (NF-kB) pathways, leading to the mobilization of transcription factors that are critical for gene expression and essential for T cell growth and differentiation. The T cell repertoire is generated in the thymus, by V-(D)-J rearrangement. This repertoire is then shaped by intrathymic selection events to generate a peripheral T cell pool of self-MH restricted, non-autoaggressive T cells. Post-thymic interaction of alpha-beta TR with the pMH complexes shapes TR structural and functional avidity. This chain is T cell receptor alpha variable 29/delta variable 5, found in Homo sapiens (Human).